Here is a 684-residue protein sequence, read N- to C-terminus: Probable Xaa-Pro aminopeptidase P (684 aa).

Positions 481, 492, 590, and 604 each coordinate Mn(2+).

The protein belongs to the peptidase M24B family. Mn(2+) serves as cofactor.

It carries out the reaction Release of any N-terminal amino acid, including proline, that is linked to proline, even from a dipeptide or tripeptide.. In terms of biological role, catalyzes the removal of a penultimate prolyl residue from the N-termini of peptides. The protein is Probable Xaa-Pro aminopeptidase P (ampp) of Neurospora crassa (strain ATCC 24698 / 74-OR23-1A / CBS 708.71 / DSM 1257 / FGSC 987).